Reading from the N-terminus, the 599-residue chain is Putative sensor histidine kinase NtrY-like (599 aa).

The next 4 membrane-spanning stretches (helical) occupy residues 17-37 (ILIL…FYVI), 44-64 (FSTI…LGIL), 85-105 (IVIA…VFSV), and 285-305 (IMFI…GVLF). Residues 307 to 361 (AKIVKPIKKLVTATDKVKDGDLTVQVPENEVDKDEIGTLYAAFNRMIKQLSRQQR) enclose the HAMP domain. In terms of domain architecture, Histidine kinase spans 378 to 589 (KVAHEIKNPL…IIDIKFDLKE (212 aa)). Histidine 381 bears the Phosphohistidine; by autocatalysis mark.

The protein resides in the cell membrane. The catalysed reaction is ATP + protein L-histidine = ADP + protein N-phospho-L-histidine.. Its function is as follows. Member of the two-component regulatory system RP614/RP562. This is Putative sensor histidine kinase NtrY-like from Rickettsia prowazekii (strain Madrid E).